A 566-amino-acid polypeptide reads, in one-letter code: MEEIEELIYKYALQNAYKHGGKAQDKAVVSKIFVERPDLRSRAKEISEIAKKIVEKVNSMSIQDQERELKEKYPDLLEEKKKEEPEKKTLPPIKVEGKFVTRFAPNPDGPIHLGNARAAIISYKYAEMYKGEFILRFDDTDPKVKKPIKEAYDWIRKDLKWLGIKWDKEVKASERLEFYYSMAKELISKGFAYVDTCSEEEFKKMRDASKPCPNRLKSAEDNLYLFEKMLNGEFKEGEAVVRIKTDLSLPDPSQRDWVLLRIIDVKKNPHPITGDKYWIWPTYNFASALDDHDLGITHIFRGKEHEVNAEKQKWIYNYMGWKYPYVEEFGRLRLEGFMMSKSKIRTVLEKGVSIDDPRLPTLAGLRRRGILPETIIETIITVGLKVSDATISFDNLAALNRKKLDPIAKRLMFVQQPKEFIIELSEPIRAKIPYNPSKPSEYREILVNPGDKILLDAKDAEEGAVVRLMELCNVTISGNKLIFHSKTLEDAKKLNAKIIQWVKKDEASNVEVIIPDPNEEKPPISGYGEKEIGNLKINEIVQFIRFGFVRVDNKIDNKVTVIFSHE.

A 'HIGH' region motif is present at residues 105 to 115 (PNPDGPIHLGN).

Belongs to the class-I aminoacyl-tRNA synthetase family. Glutamate--tRNA ligase type 2 subfamily.

It localises to the cytoplasm. The catalysed reaction is tRNA(Glu) + L-glutamate + ATP = L-glutamyl-tRNA(Glu) + AMP + diphosphate. Its function is as follows. Catalyzes the attachment of glutamate to tRNA(Glu) in a two-step reaction: glutamate is first activated by ATP to form Glu-AMP and then transferred to the acceptor end of tRNA(Glu). The protein is Glutamate--tRNA ligase of Sulfurisphaera tokodaii (strain DSM 16993 / JCM 10545 / NBRC 100140 / 7) (Sulfolobus tokodaii).